The following is a 682-amino-acid chain: K(+)-insensitive pyrophosphate-energized proton pump 2 (682 aa).

A run of 5 helical transmembrane segments spans residues 1-21, 56-76, 78-98, 130-150, and 160-180; these read MELF…ALYM, TIAG…RQYH, AVAF…GMYV, LAVT…FGGA, and IVGF…SGGI. A substrate-binding site is contributed by lysine 183. Residues aspartate 186, aspartate 190, and aspartate 216 each coordinate Mg(2+). The next 7 helical transmembrane spans lie at 237-257, 258-278, 291-311, 318-338, 353-373, 375-395, and 404-424; these read IGAM…GIVF, PLVA…FVRA, GYIV…RYML, FIYF…FVLI, IARA…AVGF, STAL…WLGL, and LYGT…ILAM. Residue aspartate 432 coordinates Mg(2+). Transmembrane regions (helical) follow at residues 468–488, 506–526, 574–594, and 595–615; these read YAIG…IDEV, EVFV…STAI, MVLP…VLKA, and EAAA…ALFL. Ca(2+) is bound by residues aspartate 623, aspartate 649, and aspartate 653. Lysine 656 is a substrate binding site. Residues 662-682 form a helical membrane-spanning segment; it reads SLHVLVKLISTITLVLAGLFI.

Belongs to the H(+)-translocating pyrophosphatase (TC 3.A.10) family. K(+)-insensitive subfamily. As to quaternary structure, homodimer. Requires Mg(2+) as cofactor.

It is found in the cell membrane. It catalyses the reaction diphosphate + H2O + H(+)(in) = 2 phosphate + 2 H(+)(out). In terms of biological role, proton pump that utilizes the energy of pyrophosphate hydrolysis as the driving force for proton movement across the membrane. Generates a proton motive force. The chain is K(+)-insensitive pyrophosphate-energized proton pump 2 from Moorella thermoacetica (strain ATCC 39073 / JCM 9320).